Here is a 35-residue protein sequence, read N- to C-terminus: Tau-theraphotoxin-Pc1b (35 aa).

3 cysteine pairs are disulfide-bonded: Cys-3-Cys-17, Cys-10-Cys-22, and Cys-16-Cys-29. Phe-35 bears the Phenylalanine amide mark.

It belongs to the neurotoxin 10 (Hwtx-1) family. 62 (Vatx) subfamily. Expressed by the venom gland.

The protein localises to the secreted. Selectively activates the mammalian capsaicin receptor TRPV1, a non-selective cation channel expressed by sensory neurons of the pain pathway. Is more potent than VaTx1, but less potent than VaTx3. Interacts with distinct regions of the channel than capsaicin, since it only acts on the extracellular face of the channel, and capsaicin binds to the cytosolic side. Also activates avian TRPV1, which is insensitive to capsaicin. Produce weak inhibition on potassium channels Kv2.1/KCNB1. The sequence is that of Tau-theraphotoxin-Pc1b from Psalmopoeus cambridgei (Trinidad chevron tarantula).